The following is a 98-amino-acid chain: Pore-forming peptide amoebapore A (98 aa).

The N-terminal stretch at 1–21 (MKAIVFVLIFAVAFAVTATHQ) is a signal peptide. In terms of domain architecture, Saposin B-type spans 22–98 (GEILCNLCTG…NAICAKIHAC (77 aa)). Intrachain disulfides connect Cys-26–Cys-98, Cys-29–Cys-92, and Cys-56–Cys-67.

Monomer (at pH below 4 and pH above 6). Homodimer (at pH 4-6). Hexamer; formed during insertion in the membrane.

The protein localises to the cytoplasmic granule. Forms pores in the cell membrane of host cells. Has antibacterial activity against M.luteus, no activity against E.coli. Implicated in the cytolytic activity of the parasite. This Entamoeba histolytica (strain ATCC 30459 / HM-1:IMSS / ABRM) protein is Pore-forming peptide amoebapore A.